The chain runs to 147 residues: Large ribosomal subunit protein uL13 (147 aa).

It belongs to the universal ribosomal protein uL13 family. As to quaternary structure, part of the 50S ribosomal subunit.

Its function is as follows. This protein is one of the early assembly proteins of the 50S ribosomal subunit, although it is not seen to bind rRNA by itself. It is important during the early stages of 50S assembly. The polypeptide is Large ribosomal subunit protein uL13 (Mycolicibacterium smegmatis (strain ATCC 700084 / mc(2)155) (Mycobacterium smegmatis)).